Consider the following 423-residue polypeptide: Imidazolonepropionase (423 aa).

Positions 91 and 93 each coordinate Fe(3+). Zn(2+)-binding residues include histidine 91 and histidine 93. 3 residues coordinate 4-imidazolone-5-propanoate: arginine 100, tyrosine 163, and histidine 193. Tyrosine 163 contributes to the N-formimidoyl-L-glutamate binding site. Histidine 257 contributes to the Fe(3+) binding site. Residue histidine 257 coordinates Zn(2+). Glutamine 260 is a 4-imidazolone-5-propanoate binding site. Fe(3+) is bound at residue aspartate 331. Residue aspartate 331 participates in Zn(2+) binding. N-formimidoyl-L-glutamate is bound by residues asparagine 333 and glycine 335. A 4-imidazolone-5-propanoate-binding site is contributed by threonine 336.

The protein belongs to the metallo-dependent hydrolases superfamily. HutI family. Zn(2+) serves as cofactor. It depends on Fe(3+) as a cofactor.

The protein resides in the cytoplasm. It catalyses the reaction 4-imidazolone-5-propanoate + H2O = N-formimidoyl-L-glutamate. It functions in the pathway amino-acid degradation; L-histidine degradation into L-glutamate; N-formimidoyl-L-glutamate from L-histidine: step 3/3. Catalyzes the hydrolytic cleavage of the carbon-nitrogen bond in imidazolone-5-propanoate to yield N-formimidoyl-L-glutamate. It is the third step in the universal histidine degradation pathway. The polypeptide is Imidazolonepropionase (Bdellovibrio bacteriovorus (strain ATCC 15356 / DSM 50701 / NCIMB 9529 / HD100)).